A 60-amino-acid chain; its full sequence is Large ribosomal subunit protein bL32 (60 aa).

Positions methionine 1–arginine 16 are enriched in basic residues. The tract at residues methionine 1–serine 60 is disordered. Residues arginine 17–leucine 44 show a composition bias toward basic and acidic residues.

The protein belongs to the bacterial ribosomal protein bL32 family.

The polypeptide is Large ribosomal subunit protein bL32 (Bradyrhizobium diazoefficiens (strain JCM 10833 / BCRC 13528 / IAM 13628 / NBRC 14792 / USDA 110)).